A 393-amino-acid chain; its full sequence is NAD(P)H-quinone oxidoreductase subunit H, chloroplastic (393 aa).

Belongs to the complex I 49 kDa subunit family. In terms of assembly, NDH is composed of at least 16 different subunits, 5 of which are encoded in the nucleus.

The protein localises to the plastid. It localises to the chloroplast thylakoid membrane. The enzyme catalyses a plastoquinone + NADH + (n+1) H(+)(in) = a plastoquinol + NAD(+) + n H(+)(out). It catalyses the reaction a plastoquinone + NADPH + (n+1) H(+)(in) = a plastoquinol + NADP(+) + n H(+)(out). NDH shuttles electrons from NAD(P)H:plastoquinone, via FMN and iron-sulfur (Fe-S) centers, to quinones in the photosynthetic chain and possibly in a chloroplast respiratory chain. The immediate electron acceptor for the enzyme in this species is believed to be plastoquinone. Couples the redox reaction to proton translocation, and thus conserves the redox energy in a proton gradient. In Nuphar advena (Common spatterdock), this protein is NAD(P)H-quinone oxidoreductase subunit H, chloroplastic.